The following is a 259-amino-acid chain: Pimeloyl-[acyl-carrier protein] methyl ester esterase (259 aa).

Residues Trp-18, 78 to 79, and 139 to 143 contribute to the substrate site; these read SL and FLALD. Ser-78 (nucleophile) is an active-site residue. Catalysis depends on residues Asp-203 and His-231. Residue His-231 participates in substrate binding.

The protein belongs to the AB hydrolase superfamily. Carboxylesterase BioH family. As to quaternary structure, monomer.

The protein localises to the cytoplasm. It catalyses the reaction 6-carboxyhexanoyl-[ACP] methyl ester + H2O = 6-carboxyhexanoyl-[ACP] + methanol + H(+). It participates in cofactor biosynthesis; biotin biosynthesis. Functionally, the physiological role of BioH is to remove the methyl group introduced by BioC when the pimeloyl moiety is complete. It allows to synthesize pimeloyl-ACP via the fatty acid synthetic pathway through the hydrolysis of the ester bonds of pimeloyl-ACP esters. The polypeptide is Pimeloyl-[acyl-carrier protein] methyl ester esterase (Stenotrophomonas maltophilia (strain K279a)).